We begin with the raw amino-acid sequence, 205 residues long: Guanylate kinase (205 aa).

In terms of domain architecture, Guanylate kinase-like spans Gly-6 to Val-185. Position 13 to 20 (Arg-13 to Gly-20) interacts with ATP.

Belongs to the guanylate kinase family.

It is found in the cytoplasm. The catalysed reaction is GMP + ATP = GDP + ADP. Its function is as follows. Essential for recycling GMP and indirectly, cGMP. This chain is Guanylate kinase, found in Bacillus cereus (strain ATCC 14579 / DSM 31 / CCUG 7414 / JCM 2152 / NBRC 15305 / NCIMB 9373 / NCTC 2599 / NRRL B-3711).